Consider the following 602-residue polypeptide: NAD-dependent protein deacetylase sir-2.1 (602 aa).

The segment at 25-57 (PEIETMHIENSVEGESGRQRTESTASVNSESWQ) is disordered. Positions 46–57 (ESTASVNSESWQ) are enriched in polar residues. The Deacetylase sirtuin-type domain occupies 119 to 374 (KLFTYNSLSD…RDICYALGGS (256 aa)). Residues 144-163 (GAGVSVSCGIPDFRSKDGIY) and 228-231 (QNID) contribute to the NAD(+) site. Residue histidine 246 is the Proton acceptor of the active site. Cysteine 254, cysteine 257, cysteine 278, and cysteine 281 together coordinate Zn(2+). Residues 318–320 (GSS), 343–345 (NRE), and cysteine 360 each bind NAD(+). 2 disordered regions span residues 411–468 (QERR…SDEV) and 520–551 (RNRHESDSSCESCSTVPGSDKSEANPLSRSQS).

It belongs to the sirtuin family. Class I subfamily. As to quaternary structure, interacts with ftt-2 and par-5. Interacts with daf-16 following heat-shock, which causes daf-16 to accumulate in the nucleus. Interaction with daf-16 is promoted by ftt-2. Zn(2+) serves as cofactor.

Its subcellular location is the nucleus. It carries out the reaction N(6)-acetyl-L-lysyl-[protein] + NAD(+) + H2O = 2''-O-acetyl-ADP-D-ribose + nicotinamide + L-lysyl-[protein]. Functionally, NAD-dependent deacetylase. Required for a reduction of the 'Lys-16' acetylation of histone H4 (H4K16ac) on dosage-compensated X chromosomes in hermaphrodites. Functions upstream of daf-16 in the insulin-like signaling pathway, promoting daf-16 mediated transcriptional activation and increased life-span. May also regulate life-span independently of daf-16 by modulating the transcription of genes involved in the stress response of the endoplasmic reticulum (ER). Acts upstream of the nicotinic acid metabolism pathway, which may be linked to the regulation of longevity. Plays a role in ascaroside-mediated longevity and stress resistance. The polypeptide is NAD-dependent protein deacetylase sir-2.1 (sir-2.1) (Caenorhabditis briggsae).